A 326-amino-acid polypeptide reads, in one-letter code: Acetyl-coenzyme A carboxylase carboxyl transferase subunit alpha (326 aa).

One can recognise a CoA carboxyltransferase C-terminal domain in the interval 45–298 (LEARAMQLRE…KQVLLENLDE (254 aa)).

The protein belongs to the AccA family. As to quaternary structure, acetyl-CoA carboxylase is a heterohexamer composed of biotin carboxyl carrier protein (AccB), biotin carboxylase (AccC) and two subunits each of ACCase subunit alpha (AccA) and ACCase subunit beta (AccD).

The protein localises to the cytoplasm. The enzyme catalyses N(6)-carboxybiotinyl-L-lysyl-[protein] + acetyl-CoA = N(6)-biotinyl-L-lysyl-[protein] + malonyl-CoA. It participates in lipid metabolism; malonyl-CoA biosynthesis; malonyl-CoA from acetyl-CoA: step 1/1. In terms of biological role, component of the acetyl coenzyme A carboxylase (ACC) complex. First, biotin carboxylase catalyzes the carboxylation of biotin on its carrier protein (BCCP) and then the CO(2) group is transferred by the carboxyltransferase to acetyl-CoA to form malonyl-CoA. This Nostoc punctiforme (strain ATCC 29133 / PCC 73102) protein is Acetyl-coenzyme A carboxylase carboxyl transferase subunit alpha.